Reading from the N-terminus, the 438-residue chain is 23S rRNA (uracil(1939)-C(5))-methyltransferase RlmD (438 aa).

The TRAM domain occupies 10-69 (KASVNTKHQSVDVVRLDHNGAGIAFVDKKPVFIEGALPGEKAIIQFIEQKKQFSRAKLIK). [4Fe-4S] cluster-binding residues include Cys-82, Cys-88, Cys-91, and Cys-169. Gln-272, Phe-301, Asn-306, Glu-322, Asn-349, and Asp-370 together coordinate S-adenosyl-L-methionine. The Nucleophile role is filled by Cys-396.

This sequence belongs to the class I-like SAM-binding methyltransferase superfamily. RNA M5U methyltransferase family. RlmD subfamily.

The catalysed reaction is uridine(1939) in 23S rRNA + S-adenosyl-L-methionine = 5-methyluridine(1939) in 23S rRNA + S-adenosyl-L-homocysteine + H(+). Functionally, catalyzes the formation of 5-methyl-uridine at position 1939 (m5U1939) in 23S rRNA. The sequence is that of 23S rRNA (uracil(1939)-C(5))-methyltransferase RlmD from Aliivibrio fischeri (strain ATCC 700601 / ES114) (Vibrio fischeri).